We begin with the raw amino-acid sequence, 451 residues long: Phosphoglucosamine mutase (451 aa).

The Phosphoserine intermediate role is filled by Ser-101. Positions 101, 240, 242, and 244 each coordinate Mg(2+). Ser-101 carries the phosphoserine modification.

This sequence belongs to the phosphohexose mutase family. Mg(2+) is required as a cofactor. In terms of processing, activated by phosphorylation.

It catalyses the reaction alpha-D-glucosamine 1-phosphate = D-glucosamine 6-phosphate. Functionally, catalyzes the conversion of glucosamine-6-phosphate to glucosamine-1-phosphate. The protein is Phosphoglucosamine mutase of Streptococcus pyogenes serotype M12 (strain MGAS2096).